We begin with the raw amino-acid sequence, 287 residues long: Diphthine methyl ester synthase (287 aa).

Residues Leu-9, Asp-84, Gly-87, 112–113 (SI), Leu-163, Val-221, and His-248 each bind S-adenosyl-L-methionine.

Belongs to the diphthine synthase family.

Its subcellular location is the cytoplasm. The enzyme catalyses 2-[(3S)-amino-3-carboxypropyl]-L-histidyl-[translation elongation factor 2] + 4 S-adenosyl-L-methionine = diphthine methyl ester-[translation elongation factor 2] + 4 S-adenosyl-L-homocysteine + 3 H(+). The protein operates within protein modification; peptidyl-diphthamide biosynthesis. Functionally, S-adenosyl-L-methionine-dependent methyltransferase that catalyzes four methylations of the modified target histidine residue in translation elongation factor 2 (EF-2), to form an intermediate called diphthine methyl ester. The four successive methylation reactions represent the second step of diphthamide biosynthesis. This is Diphthine methyl ester synthase (dph-5) from Neurospora crassa (strain ATCC 24698 / 74-OR23-1A / CBS 708.71 / DSM 1257 / FGSC 987).